Reading from the N-terminus, the 416-residue chain is Adipocyte plasma membrane-associated protein (416 aa).

A disordered region spans residues 1–32 (MSEADGLRQRRPLRPQVVTDDDGQAPEAKDGS). The residue at position 2 (Ser2) is an N-acetylserine. Residues 2–40 (SEADGLRQRRPLRPQVVTDDDGQAPEAKDGSSFSGRVFR) are Cytoplasmic-facing. Phosphothreonine is present on Thr19. Residues 41 to 61 (VTFLMLAVSLTVPLLGAMMLL) form a helical; Signal-anchor for type II membrane protein membrane-spanning segment. Over 62–416 (ESPIDPQPLS…FLCRLSLQAV (355 aa)) the chain is Extracellular. Asn160 and Asn196 each carry an N-linked (GlcNAc...) asparagine glycan.

It belongs to the strictosidine synthase family. As to expression, liver, glomerular and tubular structures of the kidney, endothelial cells, arterial wall and pancreatic islets of Langerhans (at protein level). Found ubiquitously in adult as well as in embryonic tissues. In adult tissue, the highest expression is found in the liver, placenta and heart. Found on the cell surface of monocytes. In embryonic tissue, the highest expression levels is found in the liver and the kidney.

It localises to the membrane. Its function is as follows. Exhibits strong arylesterase activity with beta-naphthyl acetate and phenyl acetate. May play a role in adipocyte differentiation. The polypeptide is Adipocyte plasma membrane-associated protein (APMAP) (Homo sapiens (Human)).